Reading from the N-terminus, the 725-residue chain is Methionine--tRNA ligase (725 aa).

Residues 27-37 (PYANGQIHIGH) carry the 'HIGH' region motif. Cys-158, Cys-161, Cys-171, and Cys-174 together coordinate Zn(2+). Positions 348 to 352 (KMSKS) match the 'KMSKS' region motif. Lys-351 provides a ligand contact to ATP. The tRNA-binding domain maps to 619–725 (DFAKIDLRIA…SGAKPGMRVK (107 aa)).

This sequence belongs to the class-I aminoacyl-tRNA synthetase family. MetG type 1 subfamily. Homodimer. The cofactor is Zn(2+).

The protein localises to the cytoplasm. It catalyses the reaction tRNA(Met) + L-methionine + ATP = L-methionyl-tRNA(Met) + AMP + diphosphate. Functionally, is required not only for elongation of protein synthesis but also for the initiation of all mRNA translation through initiator tRNA(fMet) aminoacylation. This chain is Methionine--tRNA ligase, found in Burkholderia pseudomallei (strain 1710b).